A 360-amino-acid chain; its full sequence is S-adenosylmethionine:tRNA ribosyltransferase-isomerase (360 aa).

It belongs to the QueA family. As to quaternary structure, monomer.

The protein localises to the cytoplasm. The enzyme catalyses 7-aminomethyl-7-carbaguanosine(34) in tRNA + S-adenosyl-L-methionine = epoxyqueuosine(34) in tRNA + adenine + L-methionine + 2 H(+). Its pathway is tRNA modification; tRNA-queuosine biosynthesis. Functionally, transfers and isomerizes the ribose moiety from AdoMet to the 7-aminomethyl group of 7-deazaguanine (preQ1-tRNA) to give epoxyqueuosine (oQ-tRNA). The chain is S-adenosylmethionine:tRNA ribosyltransferase-isomerase from Burkholderia pseudomallei (strain 1106a).